The chain runs to 192 residues: Large ribosomal subunit protein uL3 (192 aa).

Belongs to the universal ribosomal protein uL3 family. As to quaternary structure, part of the 50S ribosomal subunit. Forms a cluster with proteins L14 and L19.

Functionally, one of the primary rRNA binding proteins, it binds directly near the 3'-end of the 23S rRNA, where it nucleates assembly of the 50S subunit. The polypeptide is Large ribosomal subunit protein uL3 (rplC) (Helicobacter hepaticus (strain ATCC 51449 / 3B1)).